The chain runs to 487 residues: Adenylosuccinate synthetase, chloroplastic (487 aa).

The transit peptide at 1–46 (MSLSTVNHAAAAAAAAGSGKSFSAAAPAAPSVRLPRTRAPAAAAVS) directs the protein to the chloroplast. Residues 74 to 80 (GDEGKGK) and 102 to 104 (GHT) each bind GTP. D75 serves as the catalytic Proton acceptor. Positions 75 and 102 each coordinate Mg(2+). IMP contacts are provided by residues 75–78 (DEGK), 100–103 (NAGH), T192, R206, Q286, T301, and R365. Residue H103 is the Proton donor of the active site. 361–367 (TTTGRPR) provides a ligand contact to substrate. GTP is bound by residues R367, 393–395 (KLD), and 476–478 (GVG).

This sequence belongs to the adenylosuccinate synthetase family. In terms of assembly, homodimer. Mg(2+) is required as a cofactor.

The protein resides in the plastid. Its subcellular location is the chloroplast. The enzyme catalyses IMP + L-aspartate + GTP = N(6)-(1,2-dicarboxyethyl)-AMP + GDP + phosphate + 2 H(+). Its pathway is purine metabolism; AMP biosynthesis via de novo pathway; AMP from IMP: step 1/2. Its function is as follows. Plays an important role in the de novo pathway and in the salvage pathway of purine nucleotide biosynthesis. Catalyzes the first committed step in the biosynthesis of AMP from IMP. The polypeptide is Adenylosuccinate synthetase, chloroplastic (Oryza sativa subsp. indica (Rice)).